Here is a 356-residue protein sequence, read N- to C-terminus: Heme A synthase (356 aa).

5 helical membrane passes run 23–43 (IAIW…VGGV), 105–125 (FHRL…LYFL), 141–161 (IFLL…SGLV), 173–193 (AHLG…LDLL), and 212–232 (STML…VAGI). H274 contributes to the heme binding site. Helical transmembrane passes span 276–296 (LIAW…RAVP), 307–327 (LLLI…LLVV), and 329–349 (LTLA…ALWV). H335 contributes to the heme binding site.

Belongs to the COX15/CtaA family. Type 2 subfamily. As to quaternary structure, interacts with CtaB. It depends on heme b as a cofactor.

It localises to the cell membrane. It carries out the reaction Fe(II)-heme o + 2 A + H2O = Fe(II)-heme a + 2 AH2. It functions in the pathway porphyrin-containing compound metabolism; heme A biosynthesis; heme A from heme O: step 1/1. In terms of biological role, catalyzes the conversion of heme O to heme A by two successive hydroxylations of the methyl group at C8. The first hydroxylation forms heme I, the second hydroxylation results in an unstable dihydroxymethyl group, which spontaneously dehydrates, resulting in the formyl group of heme A. This chain is Heme A synthase, found in Nitrosospira multiformis (strain ATCC 25196 / NCIMB 11849 / C 71).